The sequence spans 953 residues: MSSGLWSQEKVTSPYWEERIFYLLLQECSVTDKQTQKLLKVPKGSIGQNIQDRSVGLSRIPSAKGKKNQIGLKILEQPHAVLFVDEKDVVEINEKFTELLLAITNCEERFSLFKNRNRLSKGLQIDVGCPVKVQLRSGEEKFPGVVRFRGPLLAERTVSGIFFGVELLEEGRGQGFTDGVYQGKQLFQCDEDCGVFVALDKLELIEDDDTGLESDYAGPVDTMQVELPPLEINSRVSLKLGETIESGTVIFCDVLPGKESLGYFVGVDMDNPIGNWDGRFDGVQLCSFASVESTILLHINDIIPESVTQERRPPKLAFMSRGVGDKGSFSHNKPKATGSTSDPGTRNRSELFYTLNGSSVDSQPQSKSKNSWYIDEVAEDPAKSLTEIPPDFGHASPPLQPPSMNSLSSENRFHSLPFSLTKMPNTNGSISHSPLSLSVQSVMGELNNAPVQESPPLAVSSGNSHGLEVGSLAEVKENPPFYGVIRWIGQPPGLNEVLAGLELEDECAGCTDGTFRGTRYFTCALKKALFVKLKSCRPDSRFASLQPVSNQIERCNSLAFGGYLSEVVEENTPPKMEKEGFEIMIGKKKGIQGHYNSCYLDSTLFCLFAFSSVLDTVLLRPKEKNDVEYYSETQELLRTEIVNPLRIYGYVCATKIMKLRKILEKVEAASGFTSEEKDPEEFLNILFHHILRVEPLLKIRSAGQKVQDCYFYQIFMEKNEKVGVPTIQQLLECSFINSNLKFAEAPSCLIIQMPRFGKDFKLFKKIFPSLELNITDLLEDTPRQCRICGGLAMYECRECYDDPDISAGKIKQFCKTCNAQVHLHPKRLNHKYNPVSLPKDLPDWDWRHGCIPCQKMELFAVLCIETSHYVAFVKYGKDDSAWLFFDSMADRDGGQNGFNIPQVTPCPEVGEYLKMSLDDLHSLDSRRIQGCARRLLCDAYMCMYQSPTMSLYK.

Positions C106–G590 are interaction with TRIP. 2 consecutive CAP-Gly domains span residues L153 to A198 and D253 to C286. 2 disordered regions span residues P313–S349 and S384–E410. The span at T337–R346 shows a compositional bias: polar residues. Phosphoserine is present on residues S384, S415, and S419. Residues D391 to G466 are interaction with TRAF2. Residues L467–E681 form an interaction with IKBKG/NEMO region. Residues G489 to K532 form the CAP-Gly 3 domain. Residues K589–P947 enclose the USP domain. C598 serves as the catalytic Nucleophile. The tract at residues L778–H830 is B-box. 8 residues coordinate Zn(2+): C785, C788, C796, C799, C814, C817, H822, and H830. H868 serves as the catalytic Proton acceptor.

Belongs to the peptidase C19 family. Interacts (via CAP-Gly domain) with IKBKG/NEMO (via proline-rich C-terminal region). Interacts with TRAF2 and TRIP. Interacts with PLK1, DVL1, DVL3, MAVS, TBK1, IKKE and RIGI. Interacts (via CAP-Gly domain) with microtubules. Interacts with HDAC6 and BCL3. Interacts with MAP3K7. Identified in a complex with TRAF6 and SQSTM1. Interacts with OPTN and SQSTM1. Interacts with CEP350. Interacts with RNF31; the interaction is indirect and is mediated via SPATA2. Interacts with SPATA2 (via the PUB domain); the interaction is direct and recruits CYLD to the LUBAC complex, thereby regulating TNF-alpha-induced necroptosis. In terms of processing, phosphorylated on several serine residues by IKKA and/or IKKB in response to immune stimuli. Phosphorylation requires IKBKG. Phosphorylation abolishes TRAF2 deubiquitination, interferes with the activation of Jun kinases, and strongly reduces CD40-dependent gene activation by NF-kappa-B. Ubiquitinated. Polyubiquitinated in hepatocytes treated with palmitic acid. Ubiquitination is mediated by E3 ligase TRIM47 and leads to proteasomal degradation.

It is found in the cytoplasm. It localises to the perinuclear region. Its subcellular location is the cytoskeleton. The protein resides in the cell membrane. The protein localises to the microtubule organizing center. It is found in the centrosome. It localises to the spindle. Its subcellular location is the cilium basal body. It carries out the reaction Thiol-dependent hydrolysis of ester, thioester, amide, peptide and isopeptide bonds formed by the C-terminal Gly of ubiquitin (a 76-residue protein attached to proteins as an intracellular targeting signal).. Deubiquitinase that specifically cleaves 'Lys-63'- and linear 'Met-1'-linked polyubiquitin chains and is involved in NF-kappa-B activation and TNF-alpha-induced necroptosis. Negatively regulates NF-kappa-B activation by deubiquitinating upstream signaling factors. Contributes to the regulation of cell survival, proliferation and differentiation via its effects on NF-kappa-B activation. Negative regulator of Wnt signaling. Inhibits HDAC6 and thereby promotes acetylation of alpha-tubulin and stabilization of microtubules. Plays a role in the regulation of microtubule dynamics, and thereby contributes to the regulation of cell proliferation, cell polarization, cell migration, and angiogenesis. Required for normal cell cycle progress and normal cytokinesis. Inhibits nuclear translocation of NF-kappa-B. Plays a role in the regulation of inflammation and the innate immune response, via its effects on NF-kappa-B activation. Dispensable for the maturation of intrathymic natural killer cells, but required for the continued survival of immature natural killer cells. Negatively regulates TNFRSF11A signaling and osteoclastogenesis. Involved in the regulation of ciliogenesis, allowing ciliary basal bodies to migrate and dock to the plasma membrane; this process does not depend on NF-kappa-B activation. Ability to remove linear ('Met-1'-linked) polyubiquitin chains regulates innate immunity and TNF-alpha-induced necroptosis: recruited to the LUBAC complex via interaction with SPATA2 and restricts linear polyubiquitin formation on target proteins. Regulates innate immunity by restricting linear polyubiquitin formation on RIPK2 in response to NOD2 stimulation. Involved in TNF-alpha-induced necroptosis by removing linear ('Met-1'-linked) polyubiquitin chains from RIPK1, thereby regulating the kinase activity of RIPK1. Negatively regulates intestinal inflammation by removing 'Lys-63' linked polyubiquitin chain of NLRP6, thereby reducing the interaction between NLRP6 and PYCARD/ASC and formation of the NLRP6 inflammasome. Does not catalyze deubiquitination of heterotypic 'Lys-63'-/'Lys-48'-linked branched ubiquitin chains. Removes 'Lys-63' linked polyubiquitin chain of MAP3K7, which inhibits phosphorylation and blocks downstream activation of the JNK-p38 kinase cascades. Also removes 'Lys-63'-linked polyubiquitin chains of MAP3K1 and MA3P3K3, which inhibit their interaction with MAP2K1 and MAP2K2. The polypeptide is Ubiquitin carboxyl-terminal hydrolase CYLD (CYLD) (Bos taurus (Bovine)).